The primary structure comprises 397 residues: Probable sugar efflux transporter (397 aa).

12 helical membrane-spanning segments follow: residues 15–35, 50–70, 81–101, 103–123, 136–156, 169–189, 209–229, 246–266, 275–295, 301–321, 333–353, and 364–384; these read VVTL…PVGL, VGIM…PFML, LICL…AWNF, VLVI…SITA, AQAL…GLPI, TFFA…KLLP, PALM…YTAY, FATV…VVFG, PLIS…LPAA, LAVL…GMQV, VAMA…ALVG, and TIGY…IIIF.

Belongs to the major facilitator superfamily. SotB (TC 2.A.1.2) family.

It is found in the cell inner membrane. Its function is as follows. Involved in the efflux of sugars. The physiological role may be the reduction of the intracellular concentration of toxic sugars or sugar metabolites. This Citrobacter koseri (strain ATCC BAA-895 / CDC 4225-83 / SGSC4696) protein is Probable sugar efflux transporter.